A 511-amino-acid polypeptide reads, in one-letter code: GMP synthase [glutamine-hydrolyzing] (511 aa).

One can recognise a Glutamine amidotransferase type-1 domain in the interval 3–198; sequence SVLVLDFGSQ…LLNIAAITPD (196 aa). Residue cysteine 80 is the Nucleophile of the active site. Catalysis depends on residues histidine 172 and glutamate 174. A GMPS ATP-PPase domain is found at 199–386; the sequence is WSSKSFIEHQ…LGIPEDILMR (188 aa). 226-232 is a binding site for ATP; that stretch reads SGGVDST.

Homodimer.

It carries out the reaction XMP + L-glutamine + ATP + H2O = GMP + L-glutamate + AMP + diphosphate + 2 H(+). It functions in the pathway purine metabolism; GMP biosynthesis; GMP from XMP (L-Gln route): step 1/1. Its function is as follows. Catalyzes the synthesis of GMP from XMP. In Chlorobium chlorochromatii (strain CaD3), this protein is GMP synthase [glutamine-hydrolyzing].